The following is a 184-amino-acid chain: ATP synthase subunit b, chloroplastic (184 aa).

A helical membrane pass occupies residues 27 to 49 (LATNPINLSVVLGVLIFFGKGVL).

It belongs to the ATPase B chain family. As to quaternary structure, F-type ATPases have 2 components, F(1) - the catalytic core - and F(0) - the membrane proton channel. F(1) has five subunits: alpha(3), beta(3), gamma(1), delta(1), epsilon(1). F(0) has four main subunits: a(1), b(1), b'(1) and c(10-14). The alpha and beta chains form an alternating ring which encloses part of the gamma chain. F(1) is attached to F(0) by a central stalk formed by the gamma and epsilon chains, while a peripheral stalk is formed by the delta, b and b' chains.

Its subcellular location is the plastid. It localises to the chloroplast thylakoid membrane. Its function is as follows. F(1)F(0) ATP synthase produces ATP from ADP in the presence of a proton or sodium gradient. F-type ATPases consist of two structural domains, F(1) containing the extramembraneous catalytic core and F(0) containing the membrane proton channel, linked together by a central stalk and a peripheral stalk. During catalysis, ATP synthesis in the catalytic domain of F(1) is coupled via a rotary mechanism of the central stalk subunits to proton translocation. Functionally, component of the F(0) channel, it forms part of the peripheral stalk, linking F(1) to F(0). This is ATP synthase subunit b, chloroplastic from Solanum bulbocastanum (Wild potato).